A 313-amino-acid polypeptide reads, in one-letter code: 3-O-acetylpapaveroxine carboxylesterase CXE2 (313 aa).

The short motif at 72–74 (HGG) is the Involved in the stabilization of the negatively charged intermediate by the formation of the oxyanion hole element. Residues serine 158, aspartate 262, and histidine 292 contribute to the active site.

It belongs to the 'GDXG' lipolytic enzyme family.

The enzyme catalyses 3-O-acetylpapaveroxine + H2O = narcotine hemiacetal + acetate + H(+). It functions in the pathway alkaloid biosynthesis. Its function is as follows. Carboxylesterase involved in the biosynthesis of the benzylisoquinoline alkaloid noscapine. Converts 3-O-acetylpapaveroxine to narcotine hemiacetal. The protein is 3-O-acetylpapaveroxine carboxylesterase CXE2 of Papaver somniferum (Opium poppy).